A 913-amino-acid polypeptide reads, in one-letter code: Tyrosine-protein phosphatase non-receptor type 3 (913 aa).

The FERM domain occupies Val-29–Lys-312. Phosphoserine is present on residues Ser-357, Ser-359, and Ser-367. Disordered regions lie at residues Glu-364–Ala-400 and Lys-417–Val-473. Thr-376 carries the post-translational modification Phosphothreonine. A Phosphoserine modification is found at Ser-381. Over residues Pro-382–His-393 the composition is skewed to basic residues. Phosphoserine is present on Ser-425. A compositionally biased stretch (polar residues) spans Ser-441–Lys-453. Residues Ser-454–Pro-470 show a composition bias toward low complexity. One can recognise a PDZ domain in the interval Leu-510–Ser-582. The region spanning Val-646–Val-901 is the Tyrosine-protein phosphatase domain. Substrate-binding positions include Asp-811, Cys-842 to Arg-848, and Gln-886. Cys-842 (phosphocysteine intermediate) is an active-site residue.

It belongs to the protein-tyrosine phosphatase family. Non-receptor class subfamily.

The protein localises to the cell membrane. It is found in the cytoplasm. The protein resides in the cytoskeleton. The enzyme catalyses O-phospho-L-tyrosyl-[protein] + H2O = L-tyrosyl-[protein] + phosphate. Its function is as follows. May act at junctions between the membrane and the cytoskeleton. The sequence is that of Tyrosine-protein phosphatase non-receptor type 3 (Ptpn3) from Mus musculus (Mouse).